The primary structure comprises 270 residues: CASP-like protein 4A1 (270 aa).

The interval 1–110 (MEELEKTQKF…PSFSSSSSTP (110 aa)) is disordered. At 1–121 (MEELEKTQKF…ESKWASLIRK (121 aa)) the chain is on the cytoplasmic side. The segment covering 24 to 66 (SSPINFEMSSRSSLHSLPQTTIESPPDSPTLSSIPDSHGSSPH) has biased composition (polar residues). Basic and acidic residues predominate over residues 85-97 (NGEEEKKVSESRR). Over residues 100–110 (RPSFSSSSSTP) the composition is skewed to low complexity. Residues 122–142 (ALLGFRVIAFVSCLVSFSVMV) traverse the membrane as a helical segment. The Extracellular segment spans residues 143-161 (SDRDKGWAHDSFYNYKEFR). A helical membrane pass occupies residues 162 to 182 (FCLAANVIGFVYSGFMICDLV). The Cytoplasmic portion of the chain corresponds to 183–198 (YLLSTSIRRSRHNLRH). A helical transmembrane segment spans residues 199-221 (FLEFGLDQMLAYLLASASTSASI). Residues 222-246 (RVDDWQSNWGADKFPDLARASVALS) are Extracellular-facing. Residues 247–267 (YVSFVAFAFCSLASGYALCAL) form a helical membrane-spanning segment. Over 268–270 (RSI) the chain is Cytoplasmic.

It belongs to the Casparian strip membrane proteins (CASP) family. In terms of assembly, homodimer and heterodimers.

It is found in the cell membrane. This Arabidopsis thaliana (Mouse-ear cress) protein is CASP-like protein 4A1.